Reading from the N-terminus, the 182-residue chain is UPF0254 protein MK0012 (182 aa).

Belongs to the UPF0254 family.

This chain is UPF0254 protein MK0012, found in Methanopyrus kandleri (strain AV19 / DSM 6324 / JCM 9639 / NBRC 100938).